The sequence spans 272 residues: Putative hydro-lyase BBta_2883 (272 aa).

This sequence belongs to the D-glutamate cyclase family.

The polypeptide is Putative hydro-lyase BBta_2883 (Bradyrhizobium sp. (strain BTAi1 / ATCC BAA-1182)).